The chain runs to 287 residues: ATP synthase subunit a (287 aa).

The next 6 helical transmembrane spans lie at 38 to 58, 96 to 116, 139 to 161, 187 to 207, 225 to 245, and 259 to 279; these read DSMV…WTAA, FIAP…AMDM, VVPT…LRFW, PLFA…EYVA, LVFM…SGVL, and LFHI…ALIY.

Belongs to the ATPase A chain family. As to quaternary structure, F-type ATPases have 2 components, CF(1) - the catalytic core - and CF(0) - the membrane proton channel. CF(1) has five subunits: alpha(3), beta(3), gamma(1), delta(1), epsilon(1). CF(0) has three main subunits: a(1), b(2) and c(9-12). The alpha and beta chains form an alternating ring which encloses part of the gamma chain. CF(1) is attached to CF(0) by a central stalk formed by the gamma and epsilon chains, while a peripheral stalk is formed by the delta and b chains.

It is found in the cell inner membrane. Its function is as follows. Key component of the proton channel; it plays a direct role in the translocation of protons across the membrane. This is ATP synthase subunit a from Verminephrobacter eiseniae (strain EF01-2).